Consider the following 307-residue polypeptide: Thioredoxin reductase (307 aa).

Residue 34 to 41 (ESKAHGGQ) participates in FAD binding. An intrachain disulfide couples C134 to C137. 275-284 (DVRAKSFRQV) contributes to the FAD binding site.

Belongs to the class-II pyridine nucleotide-disulfide oxidoreductase family. In terms of assembly, homodimer. The cofactor is FAD.

It is found in the cytoplasm. It carries out the reaction [thioredoxin]-dithiol + NADP(+) = [thioredoxin]-disulfide + NADPH + H(+). This chain is Thioredoxin reductase (trxB), found in Treponema pallidum (strain Nichols).